The following is a 475-amino-acid chain: Phosphoglucosamine mutase (475 aa).

Serine 126 functions as the Phosphoserine intermediate in the catalytic mechanism. Positions 126, 265, 267, and 269 each coordinate Mg(2+). Serine 126 is subject to Phosphoserine.

It belongs to the phosphohexose mutase family. Mg(2+) serves as cofactor. Post-translationally, activated by phosphorylation.

The catalysed reaction is alpha-D-glucosamine 1-phosphate = D-glucosamine 6-phosphate. Functionally, catalyzes the conversion of glucosamine-6-phosphate to glucosamine-1-phosphate. This Synechococcus sp. (strain ATCC 27144 / PCC 6301 / SAUG 1402/1) (Anacystis nidulans) protein is Phosphoglucosamine mutase.